A 218-amino-acid chain; its full sequence is Alkylmercury lyase (218 aa).

Belongs to the MerB family.

The enzyme catalyses an alkylmercury + H(+) = an alkane + Hg(2+). Its function is as follows. Cleaves the carbon-mercury bond of organomercurials such as phenylmercuric acetate. One product is Hg(2+), which is subsequently detoxified by the mercuric reductase. This Bacillus cereus protein is Alkylmercury lyase (merB1).